A 737-amino-acid chain; its full sequence is Disintegrin and metalloproteinase domain-containing protein 2 (737 aa).

Positions 1–18 are cleaved as a signal peptide; that stretch reads MWLLLLLLSGLSRLGGLS. The propeptide occupies 19–180; the sequence is EPQTEGTREK…YKIRSIKPQR (162 aa). Residues 19 to 688 are Extracellular-facing; it reads EPQTEGTREK…ASAYRSKSAR (670 aa). N-linked (GlcNAc...) asparagine glycans are attached at residues N128 and N226. The Peptidase M12B domain maps to 184-381; that stretch reads HYLEIHIVVE…QSSHCLQNQP (198 aa). 4 cysteine pairs are disulfide-bonded: C293–C376, C335–C360, C337–C342, and C450–C470. N-linked (GlcNAc...) asparagine glycans are attached at residues N359, N464, N491, and N571. The Disintegrin domain occupies 389 to 478; sequence MAVCGNGELE…VCEEDFFVQD (90 aa). The region spanning 617 to 650 is the EGF-like domain; that stretch reads LNYDCTPEKCNHHGVCNNKKHCHCEPTYLPPDCK. 3 disulfides stabilise this stretch: C621–C632, C626–C638, and C640–C649. Residues 689–709 form a helical membrane-spanning segment; that stretch reads WPFFLIIPFYVVILVLIGMLV. At 710 to 737 the chain is on the cytoplasmic side; it reads KVYSQRKKWRMDDFSSEEQFESESESKD. S731 carries the phosphoserine modification.

In terms of assembly, heterodimer with ADAM1/fertilin subunit alpha. Post-translationally, the prodomain and the metalloprotease domain are cleaved during the epididymal maturation of the spermatozoa.

It localises to the membrane. Functionally, sperm surface membrane protein that may be involved in sperm-egg plasma membrane adhesion and fusion during fertilization. Could have a direct role in sperm-zona binding or migration of sperm from the uterus into the oviduct. Interactions with egg membrane could be mediated via binding between its disintegrin-like domain to one or more integrins receptors on the egg. This is a non catalytic metalloprotease-like protein. In Rattus norvegicus (Rat), this protein is Disintegrin and metalloproteinase domain-containing protein 2 (Adam2).